The primary structure comprises 264 residues: Thymidylate synthase (264 aa).

Position 21 (Arg21) interacts with dUMP. His51 is a (6R)-5,10-methylene-5,6,7,8-tetrahydrofolate binding site. 126-127 (RR) lines the dUMP pocket. The active-site Nucleophile is the Cys146. DUMP is bound by residues 166 to 169 (RSAD), Asn177, and 207 to 209 (HIY). Residue Asp169 coordinates (6R)-5,10-methylene-5,6,7,8-tetrahydrofolate. Ala263 contributes to the (6R)-5,10-methylene-5,6,7,8-tetrahydrofolate binding site.

It belongs to the thymidylate synthase family. Bacterial-type ThyA subfamily. In terms of assembly, homodimer.

It is found in the cytoplasm. It carries out the reaction dUMP + (6R)-5,10-methylene-5,6,7,8-tetrahydrofolate = 7,8-dihydrofolate + dTMP. Its pathway is pyrimidine metabolism; dTTP biosynthesis. Functionally, catalyzes the reductive methylation of 2'-deoxyuridine-5'-monophosphate (dUMP) to 2'-deoxythymidine-5'-monophosphate (dTMP) while utilizing 5,10-methylenetetrahydrofolate (mTHF) as the methyl donor and reductant in the reaction, yielding dihydrofolate (DHF) as a by-product. This enzymatic reaction provides an intracellular de novo source of dTMP, an essential precursor for DNA biosynthesis. The polypeptide is Thymidylate synthase (Agrobacterium fabrum (strain C58 / ATCC 33970) (Agrobacterium tumefaciens (strain C58))).